The chain runs to 120 residues: Dihydroneopterin aldolase (120 aa).

2 residues coordinate substrate: Glu20 and Met114.

It belongs to the archaeal dihydroneopterin aldolase family. Homotetramer.

It carries out the reaction 7,8-dihydroneopterin = 6-hydroxymethyl-7,8-dihydropterin + glycolaldehyde. Functionally, catalyzes the conversion of 7,8-dihydroneopterin (H2Neo) to 6-hydroxymethyl-7,8-dihydropterin (6-HMD). The sequence is that of Dihydroneopterin aldolase from Picrophilus torridus (strain ATCC 700027 / DSM 9790 / JCM 10055 / NBRC 100828 / KAW 2/3).